The sequence spans 385 residues: Tuliposide A-converting enzyme 1, chloroplastic (385 aa).

A chloroplast-targeting transit peptide spans Met1–Thr77. Ser235 (acyl-ester intermediate) is an active-site residue. Active-site charge relay system residues include Asp327 and His359.

It belongs to the AB hydrolase superfamily. As to quaternary structure, homodimer. Expressed in roots, stems, leaves, petals, stamens and pistils, but not in bulb scales.

Its subcellular location is the plastid. It localises to the chloroplast. It catalyses the reaction 6-tuliposide A = tulipalin A + D-glucose. Its activity is regulated as follows. Inhibited by NaF, AgNO(3), HgCl(2), CuSO(4) and phenylmethylsulfonyl fluoride (PMSF). Its function is as follows. Lactone-forming carboxylesterases, specifically catalyzing intramolecular transesterification, but not hydrolysis. Involved in the biosynthesis of tulipalins, defensive chemicals that show antimicrobial activities against a broad range of strains of bacteria and fungi. Substrates are 6-tuliposide A &gt; 6-tuliposide B. The chain is Tuliposide A-converting enzyme 1, chloroplastic (TCEA1) from Tulipa gesneriana (Garden tulip).